Consider the following 597-residue polypeptide: Elongation factor 4 (597 aa).

A tr-type G domain is found at 2-184 (KNIRNFSIIA…EIVHKIPAPE (183 aa)). Residues 14-19 (DHGKST) and 131-134 (NKID) each bind GTP.

Belongs to the TRAFAC class translation factor GTPase superfamily. Classic translation factor GTPase family. LepA subfamily.

It localises to the cell inner membrane. The catalysed reaction is GTP + H2O = GDP + phosphate + H(+). Functionally, required for accurate and efficient protein synthesis under certain stress conditions. May act as a fidelity factor of the translation reaction, by catalyzing a one-codon backward translocation of tRNAs on improperly translocated ribosomes. Back-translocation proceeds from a post-translocation (POST) complex to a pre-translocation (PRE) complex, thus giving elongation factor G a second chance to translocate the tRNAs correctly. Binds to ribosomes in a GTP-dependent manner. The protein is Elongation factor 4 of Actinobacillus succinogenes (strain ATCC 55618 / DSM 22257 / CCUG 43843 / 130Z).